The chain runs to 451 residues: UDP-N-acetylmuramate--L-alanine ligase (451 aa).

An ATP-binding site is contributed by 110–116; sequence GTHGKTT.

Belongs to the MurCDEF family.

The protein resides in the cytoplasm. It carries out the reaction UDP-N-acetyl-alpha-D-muramate + L-alanine + ATP = UDP-N-acetyl-alpha-D-muramoyl-L-alanine + ADP + phosphate + H(+). It functions in the pathway cell wall biogenesis; peptidoglycan biosynthesis. Cell wall formation. The protein is UDP-N-acetylmuramate--L-alanine ligase of Francisella tularensis subsp. novicida (strain U112).